The following is a 228-amino-acid chain: Carbonic anhydrase (228 aa).

Zn(2+) is bound by residues Cys56, Asp58, His112, and Cys115.

Belongs to the beta-class carbonic anhydrase family. It depends on Zn(2+) as a cofactor.

The catalysed reaction is hydrogencarbonate + H(+) = CO2 + H2O. In terms of biological role, catalyzes the reversible hydration of CO(2) to H(2)CO(3). The main role may be to provide inorganic carbon for the bicarbonate-dependent carboxylation reactions catalyzed by pyruvate carboxylase, acetyl-CoA carboxylase and carbamoyl-phosphate synthetase. Involved in osmoadaptation. In Emericella nidulans (strain FGSC A4 / ATCC 38163 / CBS 112.46 / NRRL 194 / M139) (Aspergillus nidulans), this protein is Carbonic anhydrase.